The chain runs to 27 residues: Protein YkiD (27 aa).

The chain is Protein YkiD from Escherichia coli (strain K12).